The chain runs to 303 residues: UDP-3-O-acyl-N-acetylglucosamine deacetylase (303 aa).

The Zn(2+) site is built by His78, His237, and Asp241. His264 functions as the Proton donor in the catalytic mechanism.

This sequence belongs to the LpxC family. Requires Zn(2+) as cofactor.

It catalyses the reaction a UDP-3-O-[(3R)-3-hydroxyacyl]-N-acetyl-alpha-D-glucosamine + H2O = a UDP-3-O-[(3R)-3-hydroxyacyl]-alpha-D-glucosamine + acetate. It functions in the pathway glycolipid biosynthesis; lipid IV(A) biosynthesis; lipid IV(A) from (3R)-3-hydroxytetradecanoyl-[acyl-carrier-protein] and UDP-N-acetyl-alpha-D-glucosamine: step 2/6. In terms of biological role, catalyzes the hydrolysis of UDP-3-O-myristoyl-N-acetylglucosamine to form UDP-3-O-myristoylglucosamine and acetate, the committed step in lipid A biosynthesis. The sequence is that of UDP-3-O-acyl-N-acetylglucosamine deacetylase from Pseudomonas syringae pv. tomato (strain ATCC BAA-871 / DC3000).